The following is a 225-amino-acid chain: UPF0758 protein Shewmr4_3597 (225 aa).

The region spanning 102 to 224 (VLTNPDLTRD…IVSFAERGWI (123 aa)) is the MPN domain. Residues H173, H175, and D186 each coordinate Zn(2+). Positions 173–186 (HNHPSGIAEPSQAD) match the JAMM motif motif.

The protein belongs to the UPF0758 family.

This is UPF0758 protein Shewmr4_3597 from Shewanella sp. (strain MR-4).